A 486-amino-acid polypeptide reads, in one-letter code: Adenylate kinase 8 (486 aa).

Adenylate kinase stretches follow at residues 58 to 258 (PRII…NFIC) and 269 to 471 (PRIL…SRLV). Position 67–72 (67–72 (ASGKKT)) interacts with ATP. Residues 87–112 (TFCDILKDDSDLTRAAQSYYDKKQNV) are NMP 1. AMP-binding positions include 139–142 (AIPK) and Arg202. The interval 176 to 205 (GKRIDPVTGDVYHVTFMWPESEEVAQRLET) is LID 1. Position 278–283 (278–283 (GAGRNL)) interacts with ATP. The tract at residues 298-327 (CCGELLKAVSADESHMGELIKPYLESEQQV) is NMP 2. AMP-binding positions include 325 to 327 (QQV) and 354 to 357 (GFPR). An LID 2 region spans residues 391–424 (LRAVDPVTGEWYHSVYKPPPGPEVQARLRFNPQH). Arg392 contacts ATP. Arg432 serves as a coordination point for AMP.

Belongs to the adenylate kinase family.

The protein resides in the cytoplasm. It is found in the cytosol. It catalyses the reaction AMP + ATP = 2 ADP. The enzyme catalyses a 2'-deoxyribonucleoside 5'-diphosphate + ATP = a 2'-deoxyribonucleoside 5'-triphosphate + ADP. It carries out the reaction a ribonucleoside 5'-diphosphate + ATP = a ribonucleoside 5'-triphosphate + ADP. Functionally, nucleoside monophosphate (NMP) kinase that catalyzes the reversible transfer of the terminal phosphate group between nucleoside triphosphates and monophosphates. Has highest activity toward AMP, and weaker activity toward dAMP, CMP and dCMP. Also displays broad nucleoside diphosphate kinase activity. The protein is Adenylate kinase 8 (ak8) of Danio rerio (Zebrafish).